Consider the following 204-residue polypeptide: Putative peptidase PfaP (204 aa).

The first 27 residues, 1–27 (MRLRKTRKIVVSMKDMAASGGYYIASS), serve as a signal peptide directing secretion. Ser19 (nucleophile) is an active-site residue. Catalysis depends on Lys70, which acts as the Proton donor/acceptor.

This sequence belongs to the peptidase S49 family.

Functionally, possible protease. May be involved in export of periplasmic flagella proteins. This Leptospira borgpetersenii protein is Putative peptidase PfaP (pfaP).